A 313-amino-acid polypeptide reads, in one-letter code: Protein FixB (313 aa).

255–283 contributes to the FAD binding site; sequence LYLAVGISGQIQHMVGANASQTIFAINKD.

This sequence belongs to the ETF alpha-subunit/FixB family. As to quaternary structure, heterodimer of FixA and FixB.

It functions in the pathway amine and polyamine metabolism; carnitine metabolism. Required for anaerobic carnitine reduction. May bring reductant to CaiA. The sequence is that of Protein FixB from Escherichia coli O127:H6 (strain E2348/69 / EPEC).